Reading from the N-terminus, the 215-residue chain is FGFR1 oncogene partner 2 homolog (215 aa).

Residues 35–183 (LLNKRVEAMK…SGLRELLGIS (149 aa)) are a coiled coil.

The protein belongs to the SIKE family.

The protein resides in the cytoplasm. This chain is FGFR1 oncogene partner 2 homolog (fgfr1op2), found in Danio rerio (Zebrafish).